A 581-amino-acid chain; its full sequence is Sulfate adenylyltransferase (581 aa).

The segment at 1 to 176 is N-terminal; sequence MANAPHGGVL…VQAIQAPTHF (176 aa). The catalytic stretch occupies residues 177–401; it reads DYVPLRFTPA…LRESYPPRPQ (225 aa). Gln-204 is a sulfate binding site. Residues 204 to 207 and 298 to 301 contribute to the ATP site; these read QTRN and GRDH. Active-site residues include Thr-205, Arg-206, and Asn-207. Arg-206 lines the sulfate pocket. Sulfate is bound at residue Ala-302. Met-340 is a binding site for ATP. The tract at residues 402–581 is allosteric regulation domain; adenylyl-sulfate kinase-like; the sequence is QGFTILLTGL…IMILESQNLV (180 aa). 3'-phosphoadenylyl sulfate contacts are provided by residues 441–444, 486–487, and Arg-526; these read EELR and TA.

The protein in the N-terminal section; belongs to the sulfate adenylyltransferase family. It in the C-terminal section; belongs to the APS kinase family. Homohexamer. Dimer of trimers.

The protein resides in the cytoplasm. It catalyses the reaction sulfate + ATP + H(+) = adenosine 5'-phosphosulfate + diphosphate. It participates in sulfur metabolism; hydrogen sulfide biosynthesis; sulfite from sulfate: step 1/3. Allosterically inhibited by 3'-phosphoadenosine 5'-phosphosulfate (PAPS). Catalyzes the first intracellular reaction of sulfate assimilation, forming adenosine-5'-phosphosulfate (APS) from inorganic sulfate and ATP. Plays an important role in sulfate activation as a component of the biosynthesis pathway of sulfur-containing amino acids. The sequence is that of Sulfate adenylyltransferase from Cryptococcus neoformans var. neoformans serotype D (strain B-3501A) (Filobasidiella neoformans).